A 187-amino-acid chain; its full sequence is Adenine phosphoribosyltransferase (187 aa).

This sequence belongs to the purine/pyrimidine phosphoribosyltransferase family. In terms of assembly, homodimer.

The protein resides in the cytoplasm. It catalyses the reaction AMP + diphosphate = 5-phospho-alpha-D-ribose 1-diphosphate + adenine. It functions in the pathway purine metabolism; AMP biosynthesis via salvage pathway; AMP from adenine: step 1/1. Its function is as follows. Catalyzes a salvage reaction resulting in the formation of AMP, that is energically less costly than de novo synthesis. This Yersinia pseudotuberculosis serotype O:3 (strain YPIII) protein is Adenine phosphoribosyltransferase.